We begin with the raw amino-acid sequence, 729 residues long: Serine/threonine-protein kinase TBK1 (729 aa).

A Protein kinase domain is found at 9-310 (WLLSDILGQG…ETSDILHRMV (302 aa)). 15-23 (LGQGATANV) contributes to the ATP binding site. Lysine 30 participates in a covalent cross-link: Glycyl lysine isopeptide (Lys-Gly) (interchain with G-Cter in ubiquitin). Lysine 38 provides a ligand contact to ATP. The active-site Proton acceptor is the aspartate 135. Serine 172 carries the post-translational modification Phosphoserine; by autocatalysis and IKKB. Residues 309–385 (MVIHVFSLQQ…ENPIFVVSRE (77 aa)) enclose the Ubiquitin-like domain. A Glycyl lysine isopeptide (Lys-Gly) (interchain with G-Cter in ubiquitin) cross-link involves residue lysine 401. Coiled coils occupy residues 407 to 657 (DLDG…LQET) and 658 to 713 (LPQK…ILER). An N6-methyllysine; by SETD4 modification is found at lysine 607. The interval 621–729 (RKMLHLRKQL…DGGLRNVDCL (109 aa)) is interaction with AZI2, TANK and TBKBP1. Lysine 670 is covalently cross-linked (Glycyl lysine isopeptide (Lys-Gly) (interchain with G-Cter in ubiquitin)). Serine 716 bears the Phosphoserine mark.

It belongs to the protein kinase superfamily. Ser/Thr protein kinase family. I-kappa-B kinase subfamily. As to quaternary structure, homodimer. Interacts with DDX3X, TIRAP and TRAF2. Part of a ternary complex consisting of TANK, TRAF2 and TBK1. Interacts with AZI2, TANK and TBKBP1; these interactions are mutually exclusive and mediate TBK1 activation. Interacts with GSK3B; this interaction promotes TBK1 self-association and autophosphorylation. Interacts with SIKE1; SIKE1 is associated with TBK1 under physiological condition and dissociated from TBK1 upon viral infection or TLR3 stimulation. Interacts with IRF3, leading to IRF3 phosphorylation. Interacts with RIGI. Interacts with CYLD. Interacts with OPTN and TRAF3. Interacts with SRC. Interacts with the exocyst complex subunit SEC5/EXOC2; this interaction is sufficient to trigger TBK1 activity. Interacts with STING1, leading to STING1 phosphorylation. Interacts with IFIT3 (via N-terminus). Interacts with MAVS; interaction only takes place in the presence of IFIT3 and leads to MAVS phosphorylation. Interacts (via protein kinase domain) with TTLL12 (via TTL domain); the interaction prevents MAVS binding to TBK1. Interacts with TICAM1; this interaction is enhanced in the presence of WDFY1 and leads to TICAM1 phosphorylation. Interacts with TRIM26. Interacts with TRIM23. Interacts with TTC4 and IKBKE. Interacts with HNRNPA2B1. Interacts with DDX3X. Interacts with TRIM14. Interacts with CEP170; efficient complex formation may be dependent on the presence of CCDC61. Interacts with TRAF3IP3. Interacts with HSP90AA1; the interaction mediates TBK1 association with TOMM70. Interacts with TAX1BP1. Interacts with kinase IKBKB; the complex interacts with STAT1, leading to phosphorylation of STAT1 on 'Thr-749' by IKBKB. Interacts with ICOS; this interaction is critical for the maturation of T follicular regulatory cells. Interacts with RNF144B; this interaction prevents TBK1 phosphorylation and subsequent activation. Interacts with ASB8; this interaction promotes TBK1 proteasomal degradation. Forms a ternary complex with ZNF268 and SETD4; the interaction with SETD4 is ZNF268-dependent and leads to TBK1 monomethylation, which enhances its interaction with IRF3 and MAVS. (Microbial infection) Interacts with Borna disease virus (BDV) P protein leading to its phosphorylation. In terms of assembly, (Microbial infection) Interacts with Ebola virus protein VP35. As to quaternary structure, (Microbial infection) Interacts with HCV NS3; this interaction leads to inhibition of cellular antiviral response by blocking necessary interactions between the TBK1 and its substrates IRF3 and IRF7. (Microbial infection) Interacts with human herpesvirus 1 protein ICP34.5. In terms of assembly, (Microbial infection) Interacts with Zika virus non-structural protein 1/NS1 and non-structural protein 4B/NS4B. As to quaternary structure, (Microbial infection) Interacts with SARS-CoV-2 non-structural protein 6; this interaction decreases IRF3 phosphorylation by 57%, which leads to reduced IFN-beta (IFNB) production. Interacts with SARS-CoV-2 helicase; this interaction inhibits TBK1 phosphorylation and decreases IRF3 phosphorylation by 75%, which leads to reduced IFN-beta production. Interacts with SARS-CoV-2 M protein; the interaction promotes TBK1 degradation via 'Lys-48'-linked ubiquitination. (Microbial infection) Interacts with human cytomegalovirus protein UL35; this interaction inhibits type I interferon production. In terms of assembly, (Microbial infection) Interacts with heartland virus NSs; this interaction antagonizes TBK1 phosphorylation and inhibits TBK1-IRF3 interaction and thus the establishment of an antiviral state. As to quaternary structure, (Microbial infection) Interacts (via N-terminus) with Severe fever with thrombocytopenia virus (SFTSV) NSs; this interaction antagonizes TBK1 phosphorylation and sequesters TBK1 in NSs-induced cytoplasmic inclusion bodies thereby inhibiting the IFN responses. Autophosphorylation at Ser-172 activates the kinase, and is an essential step for virus-triggered signaling. Phosphorylated by IKBKB/IKKB at Ser-172. Phosphorylation requires homodimerization and ubiquitination at Lys-30 and Lys-401. Dephosphorylated at Ser-172 by PPM1B and this negatively regulates its role in mediating antiviral response. Post-translationally, 'Lys-63'-linked polyubiquitination by MIB1 after RNA virus infection, or by NRDP1 after LPS stimulation at Lys-30 and Lys-401, participates in kinase activation. 'Lys-48'-linked polyubiquitination at Lys-670 by DTX4 leads to proteasomal degradation. 'Lys-48'-linked polyubiquitination by TRAIP also leads to proteasomal degradation. 'Lys-48'-linked polyubiquitination by TRAF7; leading to proteasomal degradation. 'Lys-63'-linked polyubiquitination by RNF128 at Lys-30 and Lys-401 leads to the activation of antiviral responses. 'Lys-48'-linked polyubiquitination after 'lys-33'-linked deubiquitination by USP38 promotes TBK1 degradation. In terms of processing, (Microbial infection) Interaction with SARS-CoV-2 M protein induces 'Lys-48'-linked ubiquitination which leads to proteasomal degradation. (Microbial infection) Deubiquitinated by Epstein-Barr virus BPLF1 on both 'Lys-48' and 'Lys-63'-linked ubiquitin chains; leading to inhibition of type I interfewron production. Post-translationally, monomethylation at Lys-607 by SETD4 maximizes TBK1 activation and promotes efficient interferon signaling. Ubiquitous with higher expression in testis. Expressed in the ganglion cells, nerve fiber layer and microvasculature of the retina.

It localises to the cytoplasm. The enzyme catalyses L-seryl-[protein] + ATP = O-phospho-L-seryl-[protein] + ADP + H(+). It carries out the reaction L-threonyl-[protein] + ATP = O-phospho-L-threonyl-[protein] + ADP + H(+). Its function is as follows. Serine/threonine kinase that plays an essential role in regulating inflammatory responses to foreign agents. Following activation of toll-like receptors by viral or bacterial components, associates with TRAF3 and TANK and phosphorylates interferon regulatory factors (IRFs) IRF3 and IRF7 as well as DDX3X. This activity allows subsequent homodimerization and nuclear translocation of the IRFs leading to transcriptional activation of pro-inflammatory and antiviral genes including IFNA and IFNB. In order to establish such an antiviral state, TBK1 form several different complexes whose composition depends on the type of cell and cellular stimuli. Plays a key role in IRF3 activation: acts by first phosphorylating innate adapter proteins MAVS, STING1 and TICAM1 on their pLxIS motif, leading to recruitment of IRF3, thereby licensing IRF3 for phosphorylation by TBK1. Phosphorylated IRF3 dissociates from the adapter proteins, dimerizes, and then enters the nucleus to induce expression of interferons. Thus, several scaffolding molecules including FADD, TRADD, MAVS, AZI2, TANK or TBKBP1/SINTBAD can be recruited to the TBK1-containing-complexes. Under particular conditions, functions as a NF-kappa-B effector by phosphorylating NF-kappa-B inhibitor alpha/NFKBIA, IKBKB or RELA to translocate NF-Kappa-B to the nucleus. Restricts bacterial proliferation by phosphorylating the autophagy receptor OPTN/Optineurin on 'Ser-177', thus enhancing LC3 binding affinity and antibacterial autophagy. Phosphorylates SMCR8 component of the C9orf72-SMCR8 complex, promoting autophagosome maturation. Phosphorylates ATG8 proteins MAP1LC3C and GABARAPL2, thereby preventing their delipidation and premature removal from nascent autophagosomes. Seems to play a role in energy balance regulation by sustaining a state of chronic, low-grade inflammation in obesity, which leads to a negative impact on insulin sensitivity. Attenuates retroviral budding by phosphorylating the endosomal sorting complex required for transport-I (ESCRT-I) subunit VPS37C. Phosphorylates Borna disease virus (BDV) P protein. Plays an essential role in the TLR3- and IFN-dependent control of herpes virus HSV-1 and HSV-2 infections in the central nervous system. Acts both as a positive and negative regulator of the mTORC1 complex, depending on the context: activates mTORC1 in response to growth factors by catalyzing phosphorylation of MTOR, while it limits the mTORC1 complex by promoting phosphorylation of RPTOR. Acts as a positive regulator of the mTORC2 complex by mediating phosphorylation of MTOR, leading to increased phosphorylation and activation of AKT1. Phosphorylates and activates AKT1. Involved in the regulation of TNF-induced RIPK1-mediated cell death, probably acting via CYLD phosphorylation that in turn controls RIPK1 ubiquitination status. Also participates in the differentiation of T follicular regulatory cells together with the receptor ICOS. This Homo sapiens (Human) protein is Serine/threonine-protein kinase TBK1.